A 327-amino-acid polypeptide reads, in one-letter code: Interleukin-12 subunit beta (327 aa).

Positions methionine 1–alanine 22 are cleaved as a signal peptide. In terms of domain architecture, Ig-like C2-type spans isoleucine 23–lysine 106. The cysteines at positions 50 and 90 are disulfide-linked. Residues asparagine 125, asparagine 135, asparagine 223, and asparagine 315 are each glycosylated (N-linked (GlcNAc...) asparagine). Residues proline 238–serine 327 form the Fibronectin type-III domain.

The protein belongs to the IL-12B family. In terms of assembly, heterodimer with IL12A; disulfide-linked. The heterodimer is known as interleukin IL-12. Heterodimer with IL23A; disulfide-linked. The heterodimer is known as interleukin IL-23. Also secreted as a monomer. Interacts with NBR1; this interaction promotes IL-12 secretion.

It localises to the secreted. In terms of biological role, cytokine that can act as a growth factor for activated T and NK cells, enhance the lytic activity of NK/lymphokine-activated killer cells, and stimulate the production of IFN-gamma by resting PBMC. Functionally, associates with IL23A to form the IL-23 interleukin, a heterodimeric cytokine which functions in innate and adaptive immunity. IL-23 may constitute with IL-17 an acute response to infection in peripheral tissues. IL-23 binds to a heterodimeric receptor complex composed of IL12RB1 and IL23R, activates the Jak-Stat signaling cascade, stimulates memory rather than naive T-cells and promotes production of pro-inflammatory cytokines. IL-23 induces autoimmune inflammation and thus may be responsible for autoimmune inflammatory diseases and may be important for tumorigenesis. The chain is Interleukin-12 subunit beta (IL12B) from Mesocricetus auratus (Golden hamster).